A 276-amino-acid polypeptide reads, in one-letter code: Putative metal-binding protein TC_0696 (276 aa).

Positions 1–18 (MRLLILLLFSFGIIYSHG) are cleaved as a signal peptide. Residues histidine 59, histidine 121, histidine 185, and aspartate 256 each contribute to the a divalent metal cation site.

It belongs to the bacterial solute-binding protein 9 family.

It is found in the periplasm. In terms of biological role, part of an ATP-binding cassette (ABC) transport system involved in metal import. Binds a metal with high affinity and specificity and delivers it to the membrane permease for translocation into the cytoplasm. This chain is Putative metal-binding protein TC_0696, found in Chlamydia muridarum (strain MoPn / Nigg).